Here is a 463-residue protein sequence, read N- to C-terminus: uncharacterized protein (463 aa).

Positions 12-70 constitute a TRAM domain; sequence LWQQGSVVELTITGLNHQGEGIGRFNERVVFVPDTAPGDRLEVRLVKVKRNYALAQLLK. [4Fe-4S] cluster-binding residues include Cys83, Cys89, Cys92, and Cys171. The S-adenosyl-L-methionine site is built by Gln295, Tyr324, Glu345, and Asp390. Cys417 (nucleophile) is an active-site residue.

The protein belongs to the class I-like SAM-binding methyltransferase superfamily. RNA M5U methyltransferase family.

This is an uncharacterized protein from Synechocystis sp. (strain ATCC 27184 / PCC 6803 / Kazusa).